We begin with the raw amino-acid sequence, 204 residues long: Holliday junction branch migration complex subunit RuvA (204 aa).

The tract at residues 1–64 (MIGKLKGTID…EDQLKLFGFM (64 aa)) is domain I. The segment at 65-143 (TALEREWFNL…AFAGEAINIA (79 aa)) is domain II. The segment at 144–151 (LKQELGEG) is flexible linker. The domain III stretch occupies residues 152-204 (VAAAPVADAVSALTNLGYSRDQAANAVAAAMKTAGDGADSAKLIRLGLKELAR).

The protein belongs to the RuvA family. In terms of assembly, homotetramer. Forms an RuvA(8)-RuvB(12)-Holliday junction (HJ) complex. HJ DNA is sandwiched between 2 RuvA tetramers; dsDNA enters through RuvA and exits via RuvB. An RuvB hexamer assembles on each DNA strand where it exits the tetramer. Each RuvB hexamer is contacted by two RuvA subunits (via domain III) on 2 adjacent RuvB subunits; this complex drives branch migration. In the full resolvosome a probable DNA-RuvA(4)-RuvB(12)-RuvC(2) complex forms which resolves the HJ.

Its subcellular location is the cytoplasm. The RuvA-RuvB-RuvC complex processes Holliday junction (HJ) DNA during genetic recombination and DNA repair, while the RuvA-RuvB complex plays an important role in the rescue of blocked DNA replication forks via replication fork reversal (RFR). RuvA specifically binds to HJ cruciform DNA, conferring on it an open structure. The RuvB hexamer acts as an ATP-dependent pump, pulling dsDNA into and through the RuvAB complex. HJ branch migration allows RuvC to scan DNA until it finds its consensus sequence, where it cleaves and resolves the cruciform DNA. The chain is Holliday junction branch migration complex subunit RuvA from Rhizobium etli (strain CIAT 652).